Reading from the N-terminus, the 906-residue chain is Probable dipeptidyl-aminopeptidase B (906 aa).

Positions methionine 1 to glutamate 11 are enriched in acidic residues. Residues methionine 1–leucine 33 form a disordered region. Topologically, residues methionine 1 to arginine 85 are cytoplasmic. Residues proline 21–leucine 33 show a composition bias toward low complexity. Residues leucine 86–isoleucine 106 form a helical; Signal-anchor for type II membrane protein membrane-spanning segment. Over threonine 107–histidine 906 the chain is Vacuolar. 2 N-linked (GlcNAc...) asparagine glycosylation sites follow: asparagine 338 and asparagine 629. Serine 743 (charge relay system) is an active-site residue. A glycan (N-linked (GlcNAc...) asparagine) is linked at asparagine 797. Catalysis depends on charge relay system residues aspartate 820 and histidine 853.

This sequence belongs to the peptidase S9B family.

The protein resides in the vacuole membrane. The enzyme catalyses Release of an N-terminal dipeptide, Xaa-Yaa-|-Zaa-, from a polypeptide, preferentially when Yaa is Pro, provided Zaa is neither Pro nor hydroxyproline.. Type IV dipeptidyl-peptidase which removes N-terminal dipeptides sequentially from polypeptides having unsubstituted N-termini provided that the penultimate residue is proline. The sequence is that of Probable dipeptidyl-aminopeptidase B (dapB) from Emericella nidulans (strain FGSC A4 / ATCC 38163 / CBS 112.46 / NRRL 194 / M139) (Aspergillus nidulans).